Reading from the N-terminus, the 201-residue chain is dCTP deaminase, dUMP-forming (201 aa).

Residues 101–106 (KSSLGR), D119, 127–129 (TLE), Q148, Y162, and Q174 each bind dCTP. E129 functions as the Proton donor/acceptor in the catalytic mechanism.

It belongs to the dCTP deaminase family. Homotrimer.

The catalysed reaction is dCTP + 2 H2O = dUMP + NH4(+) + diphosphate. It functions in the pathway pyrimidine metabolism; dUMP biosynthesis; dUMP from dCTP: step 1/1. Functionally, bifunctional enzyme that catalyzes both the deamination of dCTP to dUTP and the hydrolysis of dUTP to dUMP without releasing the toxic dUTP intermediate. The polypeptide is dCTP deaminase, dUMP-forming (Clavibacter michiganensis subsp. michiganensis (strain NCPPB 382)).